The chain runs to 237 residues: MFYKFLLFDLDHTLLDFDAAEDVALTQLLKEEGVADIQAYKDYYVPMNKALWKDLELKKISKQELVNTRFSRLFSHFGQEKDGSFLAQRYQFYLAQQGQTLSGAHDLLDSLIERDYDLYAATNGITAIQTGRLAQSGLVPYFNQVFISEQLQTQKPDALFYEKIGQQIAGFSKEKTLMIGDSLTADIQGGNNAGIDTIWYNPHHLENHTQAQPTYEVYSYQDLLDCLDKNILEKITF.

Asp9 functions as the Nucleophile in the catalytic mechanism. Mg(2+) contacts are provided by Asp9, Asp11, and Asp181. The Proton donor role is filled by Asp11.

The protein belongs to the HAD-like hydrolase superfamily. YjjG family. Homodimer. Mg(2+) serves as cofactor. Mn(2+) is required as a cofactor.

It is found in the cytoplasm. It carries out the reaction a ribonucleoside 5'-phosphate + H2O = a ribonucleoside + phosphate. Functionally, nucleotidase that shows high phosphatase activity toward non-canonical pyrimidine nucleotides and three canonical nucleoside 5'-monophosphates (UMP, dUMP and dTMP), and no activity against IMP, UDP, GMP, AMP, UTP or pNPP. Appears to function as a house-cleaning nucleotidase in vivo, since the general nucleotidase activity of it allows it to protect cells against non-canonical pyrimidine derivatives such as 5-fluoro-2'-deoxyuridine monophosphate (5-FdUMP), and prevents the incorporation of potentially mutagenic nucleotides such as 5-bromo-2'-deoxyuridine (5-BrdU) into DNA. Is strictly specific to pyrimidine substrates with 5'-monophosphates and shows no activity against nucleoside di- and triphosphates. The chain is Pyrimidine 5'-nucleotidase PynA from Streptococcus pneumoniae (strain ATCC BAA-255 / R6).